The chain runs to 431 residues: Tol-Pal system protein TolB (431 aa).

A signal peptide spans 1 to 26; it reads MSLMTKLGFRALVASCLITAGSAANA. A disordered region spans residues 406–431; sequence DGSAPPQILSVQGGSVREPSWGPFMQ.

This sequence belongs to the TolB family. The Tol-Pal system is composed of five core proteins: the inner membrane proteins TolA, TolQ and TolR, the periplasmic protein TolB and the outer membrane protein Pal. They form a network linking the inner and outer membranes and the peptidoglycan layer.

Its subcellular location is the periplasm. Its function is as follows. Part of the Tol-Pal system, which plays a role in outer membrane invagination during cell division and is important for maintaining outer membrane integrity. In Burkholderia cenocepacia (strain HI2424), this protein is Tol-Pal system protein TolB.